A 163-amino-acid chain; its full sequence is Beta-lactoglobulin-2 (163 aa).

Disulfide bonds link Cys66–Cys161 and Cys106–Cys120.

Belongs to the calycin superfamily. Lipocalin family. Monomer.

The protein resides in the secreted. In terms of biological role, lactoglobulin is the primary component of whey, it binds retinol and is probably involved in the transport of that molecule. In Equus asinus (Donkey), this protein is Beta-lactoglobulin-2 (LGB2).